The chain runs to 290 residues: 4-hydroxy-tetrahydrodipicolinate synthase (290 aa).

Residue T44 coordinates pyruvate. Y132 serves as the catalytic Proton donor/acceptor. K160 acts as the Schiff-base intermediate with substrate in catalysis. Residue I202 participates in pyruvate binding.

Belongs to the DapA family. Homotetramer; dimer of dimers.

Its subcellular location is the cytoplasm. It carries out the reaction L-aspartate 4-semialdehyde + pyruvate = (2S,4S)-4-hydroxy-2,3,4,5-tetrahydrodipicolinate + H2O + H(+). It functions in the pathway amino-acid biosynthesis; L-lysine biosynthesis via DAP pathway; (S)-tetrahydrodipicolinate from L-aspartate: step 3/4. Catalyzes the condensation of (S)-aspartate-beta-semialdehyde [(S)-ASA] and pyruvate to 4-hydroxy-tetrahydrodipicolinate (HTPA). In Ruegeria pomeroyi (strain ATCC 700808 / DSM 15171 / DSS-3) (Silicibacter pomeroyi), this protein is 4-hydroxy-tetrahydrodipicolinate synthase.